The sequence spans 643 residues: tRNA 5-methylaminomethyl-2-thiouridine biosynthesis bifunctional protein MnmC (643 aa).

Residues 1–223 are tRNA (mnm(5)s(2)U34)-methyltransferase; the sequence is MPDRLVSATL…VDDRLVGDYA (223 aa). Residues 247–643 are FAD-dependent cmnm(5)s(2)U34 oxidoreductase; that stretch reads IGAGLAGCAV…LRARRVGSAG (397 aa).

The protein in the N-terminal section; belongs to the methyltransferase superfamily. tRNA (mnm(5)s(2)U34)-methyltransferase family. This sequence in the C-terminal section; belongs to the DAO family. It depends on FAD as a cofactor.

The protein localises to the cytoplasm. The enzyme catalyses 5-aminomethyl-2-thiouridine(34) in tRNA + S-adenosyl-L-methionine = 5-methylaminomethyl-2-thiouridine(34) in tRNA + S-adenosyl-L-homocysteine + H(+). Functionally, catalyzes the last two steps in the biosynthesis of 5-methylaminomethyl-2-thiouridine (mnm(5)s(2)U) at the wobble position (U34) in tRNA. Catalyzes the FAD-dependent demodification of cmnm(5)s(2)U34 to nm(5)s(2)U34, followed by the transfer of a methyl group from S-adenosyl-L-methionine to nm(5)s(2)U34, to form mnm(5)s(2)U34. This Burkholderia cenocepacia (strain HI2424) protein is tRNA 5-methylaminomethyl-2-thiouridine biosynthesis bifunctional protein MnmC.